The chain runs to 145 residues: UPF0179 protein TV1250 (145 aa).

It belongs to the UPF0179 family.

The polypeptide is UPF0179 protein TV1250 (Thermoplasma volcanium (strain ATCC 51530 / DSM 4299 / JCM 9571 / NBRC 15438 / GSS1)).